A 287-amino-acid chain; its full sequence is Bifunctional protein FolD (287 aa).

Residues 166 to 168 (GAS) and Ile232 contribute to the NADP(+) site.

The protein belongs to the tetrahydrofolate dehydrogenase/cyclohydrolase family. As to quaternary structure, homodimer.

It carries out the reaction (6R)-5,10-methylene-5,6,7,8-tetrahydrofolate + NADP(+) = (6R)-5,10-methenyltetrahydrofolate + NADPH. The catalysed reaction is (6R)-5,10-methenyltetrahydrofolate + H2O = (6R)-10-formyltetrahydrofolate + H(+). It functions in the pathway one-carbon metabolism; tetrahydrofolate interconversion. Its function is as follows. Catalyzes the oxidation of 5,10-methylenetetrahydrofolate to 5,10-methenyltetrahydrofolate and then the hydrolysis of 5,10-methenyltetrahydrofolate to 10-formyltetrahydrofolate. The polypeptide is Bifunctional protein FolD (Pectobacterium atrosepticum (strain SCRI 1043 / ATCC BAA-672) (Erwinia carotovora subsp. atroseptica)).